Reading from the N-terminus, the 272-residue chain is Shikimate dehydrogenase (NADP(+)) (272 aa).

Shikimate is bound by residues 14-16 (SKS) and threonine 61. Lysine 65 acts as the Proton acceptor in catalysis. Residue glutamate 77 coordinates NADP(+). Residues asparagine 86 and aspartate 102 each coordinate shikimate. NADP(+)-binding positions include 126 to 130 (GAGGA), 149 to 154 (NRTQEK), and methionine 213. Tyrosine 215 is a shikimate binding site. An NADP(+)-binding site is contributed by glycine 237.

This sequence belongs to the shikimate dehydrogenase family. Homodimer.

The catalysed reaction is shikimate + NADP(+) = 3-dehydroshikimate + NADPH + H(+). Its pathway is metabolic intermediate biosynthesis; chorismate biosynthesis; chorismate from D-erythrose 4-phosphate and phosphoenolpyruvate: step 4/7. In terms of biological role, involved in the biosynthesis of the chorismate, which leads to the biosynthesis of aromatic amino acids. Catalyzes the reversible NADPH linked reduction of 3-dehydroshikimate (DHSA) to yield shikimate (SA). The protein is Shikimate dehydrogenase (NADP(+)) of Erwinia tasmaniensis (strain DSM 17950 / CFBP 7177 / CIP 109463 / NCPPB 4357 / Et1/99).